Reading from the N-terminus, the 365-residue chain is Cobalt-precorrin-5B C(1)-methyltransferase (365 aa).

This sequence belongs to the CbiD family.

It carries out the reaction Co-precorrin-5B + S-adenosyl-L-methionine = Co-precorrin-6A + S-adenosyl-L-homocysteine. It functions in the pathway cofactor biosynthesis; adenosylcobalamin biosynthesis; cob(II)yrinate a,c-diamide from sirohydrochlorin (anaerobic route): step 6/10. Functionally, catalyzes the methylation of C-1 in cobalt-precorrin-5B to form cobalt-precorrin-6A. In Polaromonas naphthalenivorans (strain CJ2), this protein is Cobalt-precorrin-5B C(1)-methyltransferase.